The chain runs to 257 residues: 4-diphosphocytidyl-2-C-methyl-D-erythritol kinase (257 aa).

Lysine 8 is a catalytic residue. 91–101 (PMGGGLGGGSA) serves as a coordination point for ATP. Aspartate 131 is a catalytic residue.

This sequence belongs to the GHMP kinase family. IspE subfamily.

The enzyme catalyses 4-CDP-2-C-methyl-D-erythritol + ATP = 4-CDP-2-C-methyl-D-erythritol 2-phosphate + ADP + H(+). The protein operates within isoprenoid biosynthesis; isopentenyl diphosphate biosynthesis via DXP pathway; isopentenyl diphosphate from 1-deoxy-D-xylulose 5-phosphate: step 3/6. Functionally, catalyzes the phosphorylation of the position 2 hydroxy group of 4-diphosphocytidyl-2C-methyl-D-erythritol. This Petrotoga mobilis (strain DSM 10674 / SJ95) protein is 4-diphosphocytidyl-2-C-methyl-D-erythritol kinase.